The sequence spans 369 residues: Guanine nucleotide-binding protein subunit beta-2 (369 aa).

Polar residues predominate over residues 1-24 (MSTIAGESSSSSKMPENSQPTTTE). The tract at residues 1–28 (MSTIAGESSSSSKMPENSQPTTTEKGSE) is disordered. WD repeat units follow at residues 79–109 (GHVGKVLCMDWSLDKRHIVSSSQDGKVIVWD), 121–151 (MPTTWVMACAFSPSSQMIACGGLDNKCSVVP), 167–197 (THTSYMSCCTFLRSDNLILTGSGDSTCAIWD), 209–241 (GHTGDVFAIDVPKCDTGNTFISAGADKHSLVWD), 253–283 (GHEADINTVRFHPNGDAFATGSDDATCRLFD), 297–327 (SILFPVNGVDFSLSGRILFAGYGDYRVGVWD), and 339–369 (GHENRISCLRTSPDGTAVCSASWDCTIRIWA).

This sequence belongs to the WD repeat G protein beta family. G proteins are composed of 3 units, alpha, beta and gamma. Interacts with G protein gamma subunits gpc-1 and gpc-2 and with egl-10 and eat-16.

Guanine nucleotide-binding proteins (G proteins) are involved as a modulator or transducer in various transmembrane signaling systems. The beta and gamma chains are required for the GTPase activity, for replacement of GDP by GTP, and for G protein-effector interaction. Plays a role in regulating dopamine-mediated locomotion behavior. This chain is Guanine nucleotide-binding protein subunit beta-2, found in Caenorhabditis elegans.